The sequence spans 28 residues: Dermaseptin-2.2TR (28 aa).

In terms of tissue distribution, expressed by the skin glands.

It is found in the secreted. Functionally, has antimicrobial activity. This chain is Dermaseptin-2.2TR, found in Phyllomedusa trinitatis (Trinidad leaf frog).